We begin with the raw amino-acid sequence, 506 residues long: MGIRPEEISSVLAEKIKNFDFSVETQEIGYVIQSGDGIARIYGLDNAVYGEMVEFESGVVGMVLNLEEDTVGVVVLGDPEKVKEGDVVKRTGRIMEVPVGKGLLGRVVNPLGEPIDGKGPIEYEGKRPIESPAPPIVRRQPVNTPLQTGILAIDSMIPIGRGQRELIIGDRQTGKTAIAVDTIINQKDKGVYCIYVAIGQKASTVASVVNTLEKYGAMEYTTVVAATASESAALQYIAPYAGCAMGEHFMYQGKDVLVVYDDLSKHAVAYRTLSLLLRRPPGREAYPGDVFYLHSRLLERSARLSDEYGGGSLTALPIVETQAGDISAYIPTNVISITDGQIYLESELFYSGIRPAINVGLSVSRVGGAAQIKAMKKVAGRLRLELSQYRELQVFARFGTDLDKATLEVLRQGERIVEITKQPQYQPMAVEDQVIAIYTVMNRYVTDIEVSEVRPFVMGLLKFLDEAYPEIKQSIRDTKDLTKETEEKLKAAILEYKEKYAAKGEK.

Positions 119-129 are enriched in basic and acidic residues; sequence GPIEYEGKRPI. A disordered region spans residues 119 to 138; the sequence is GPIEYEGKRPIESPAPPIVR. An ATP-binding site is contributed by 169–176; that stretch reads GDRQTGKT.

It belongs to the ATPase alpha/beta chains family. F-type ATPases have 2 components, CF(1) - the catalytic core - and CF(0) - the membrane proton channel. CF(1) has five subunits: alpha(3), beta(3), gamma(1), delta(1), epsilon(1). CF(0) has three main subunits: a(1), b(2) and c(9-12). The alpha and beta chains form an alternating ring which encloses part of the gamma chain. CF(1) is attached to CF(0) by a central stalk formed by the gamma and epsilon chains, while a peripheral stalk is formed by the delta and b chains.

The protein localises to the cell membrane. It carries out the reaction ATP + H2O + 4 H(+)(in) = ADP + phosphate + 5 H(+)(out). Its function is as follows. Produces ATP from ADP in the presence of a proton gradient across the membrane. The alpha chain is a regulatory subunit. The polypeptide is ATP synthase subunit alpha (Caldanaerobacter subterraneus subsp. tengcongensis (strain DSM 15242 / JCM 11007 / NBRC 100824 / MB4) (Thermoanaerobacter tengcongensis)).